The chain runs to 336 residues: MTESTARSIPLQIVQGDSPSAAPLQAGVKQLGGDKINRSPVQFADAPVLRKPSWIRVRIPSGNAVQNLKAKLRENRLVTVCEEASCPNIHECFGHGTATFMILGEVCTRRCSFCDVAHGRPKPPDANEPASLGQTVADMGLKYVVVTSVDRDDLRDGGAQHFVDCISAIREKSPGTRIEVLTPDFRGKGRMERALEILAQNPPDVFNHNIETVPDLYRNVRPGADYQWSLNLLKNFKAQHPEVPTKSGIMLGLGEEFEQIKATMRDLRAHDVDMITIGQYLQPTAHHHPVLKYWTPEDYKALEDYGYELGFSHVASGPMVRSSYHADVQAKGAGVS.

Positions 81, 86, 92, 107, 111, 114, and 323 each coordinate [4Fe-4S] cluster. The Radical SAM core domain occupies 93-312; that stretch reads FGHGTATFMI…EDYGYELGFS (220 aa).

The protein belongs to the radical SAM superfamily. Lipoyl synthase family. It depends on [4Fe-4S] cluster as a cofactor.

The protein localises to the cytoplasm. The catalysed reaction is [[Fe-S] cluster scaffold protein carrying a second [4Fe-4S](2+) cluster] + N(6)-octanoyl-L-lysyl-[protein] + 2 oxidized [2Fe-2S]-[ferredoxin] + 2 S-adenosyl-L-methionine + 4 H(+) = [[Fe-S] cluster scaffold protein] + N(6)-[(R)-dihydrolipoyl]-L-lysyl-[protein] + 4 Fe(3+) + 2 hydrogen sulfide + 2 5'-deoxyadenosine + 2 L-methionine + 2 reduced [2Fe-2S]-[ferredoxin]. Its pathway is protein modification; protein lipoylation via endogenous pathway; protein N(6)-(lipoyl)lysine from octanoyl-[acyl-carrier-protein]: step 2/2. Its function is as follows. Catalyzes the radical-mediated insertion of two sulfur atoms into the C-6 and C-8 positions of the octanoyl moiety bound to the lipoyl domains of lipoate-dependent enzymes, thereby converting the octanoylated domains into lipoylated derivatives. The protein is Lipoyl synthase of Stenotrophomonas maltophilia (strain R551-3).